The primary structure comprises 183 residues: MGALIGEMIALSLMALALGMDAFSVALGMGLLRLRLRQIFYIGLTIGLFHIFMPLVGMAVGRFLSREFGSIATYAGGVLLLWLGGQMIVTSFQQEEGTSFLPHGAGLLFFAFSVSLDSFSVGLSLGIFGARTMATILLFGLFSTVLTWIGLLVGRHFRQWLGSYSEALGGSILLVFGLKLLFS.

6 helical membrane-spanning segments follow: residues 8–28, 39–59, 68–88, 108–128, 133–153, and 162–182; these read MIALSLMALALGMDAFSVALG, IFYIGLTIGLFHIFMPLVGMA, FGSIATYAGGVLLLWLGGQMI, LFFAFSVSLDSFSVGLSLGIF, MATILLFGLFSTVLTWIGLLV, and GSYSEALGGSILLVFGLKLLF.

This sequence belongs to the MntP (TC 9.B.29) family.

It is found in the cell membrane. Functionally, probably functions as a manganese efflux pump. The chain is Putative manganese efflux pump MntP from Geobacillus thermodenitrificans (strain NG80-2).